The following is a 540-amino-acid chain: Cytosolic carboxypeptidase 6 (540 aa).

Residues 167–438 form the Peptidase M14 domain; sequence YPYTYTRFQH…NVARTFLDYY (272 aa). Positions 230, 233, and 328 each coordinate Zn(2+). The active-site Proton donor/acceptor is the Glu-401.

The protein belongs to the peptidase M14 family. In terms of assembly, interacts with MYLK. Requires Zn(2+) as cofactor. Widely expressed. Expressed abundantly in testis, pituitary and brain and to a lower extent in eye, stomach, adrenal and kidney. In brain, expressed at low level in cerebellum as compared to cortex.

The protein resides in the cytoplasm. It is found in the cytosol. The protein localises to the cytoskeleton. It localises to the microtubule organizing center. Its subcellular location is the centrosome. The protein resides in the centriole. It is found in the golgi apparatus. The protein localises to the cilium basal body. It carries out the reaction (L-glutamyl)(n+1)-gamma-L-glutamyl-L-glutamyl-[protein] + H2O = (L-glutamyl)(n)-gamma-L-glutamyl-L-glutamyl-[protein] + L-glutamate. The enzyme catalyses C-terminal L-alpha-aminoacyl-L-glutamyl-L-glutamyl-[tubulin] + H2O = C-terminal L-alpha-aminoacyl-L-glutamyl-[tubulin] + L-glutamate. Functionally, metallocarboxypeptidase that mediates protein deglutamylation of tubulin and non-tubulin target proteins. Catalyzes the removal of polyglutamate side chains present on the gamma-carboxyl group of glutamate residues within the C-terminal tail of tubulin protein. Specifically cleaves tubulin long-side-chains, while it is not able to remove the branching point glutamate. Also catalyzes the removal of polyglutamate residues from the carboxy-terminus of non-tubulin proteins such as MYLK. Mediates the deglutamylation of nucleotidyltransferase CGAS, leading to CGAS antiviral defense response activation. Involved in KLF4 deglutamylation which promotes KLF4 proteasome-mediated degradation, thereby negatively regulating cell pluripotency maintenance and embryogenesis. The protein is Cytosolic carboxypeptidase 6 of Mus musculus (Mouse).